Here is an 870-residue protein sequence, read N- to C-terminus: MCIQPDSLEDAYKIPRPVHREEFTQLSPSFFQTATFQLEKTNEKNNIEEPKKNKAFLNSKIIYKDLFEIRKLSNNFVNTSHPTCTETMNEQNEFSDEENFKFFGLGGCNEVGRSCHIIEYKNKVIMLDSGMHPALSGHASFPYFDEYDISKVDILLISHFHVDHSASLPYVMQQSNFRGKVFMTHATKAIYRWLMQDFVRVTSIGNSRSEDGGGGEGSNLYTDDDIMKSFDRIETIDYHSTMEIDGIRFTAYHAGHVLGACMYFIEIGGLKVLFTGDYSREENRHLHAAEVPPLKPDILISESTFGTGTLEPRIELERKLTTHIHATIAKGGRVLLPVFALGNAQELLLILDEYWSQNEDLQNVNVFYASNLAKKCMAVYETYTGIMNDKIRLSSASSEKSNPFDFKYIKSIKDLSKFQDMGPSVVVATPGMLQAGVSRQLLEKWAPDGKNLVILTGYSVEGTMAKELLKEPTMIQSATNPDMTIPRRIGIEEISFAAHVDFQQNSEFIEKVSPSKVILVHGDSVPMGRLKSALLSKYASRKGTDQEVKVYNPKNCEELIIGFKGLKIAKVLGSLAEEQLQVLKKIIQDEVSAENSKITELTEEKEEADEIKEDNGETDTTQKPNESSINVLKTGQVVSGVLVSKDFNLNLLQLQDLHEFTQLSTSIVKSKMHLKINADISLMVWHLEQMFGYINVINDDDEEWECVIMDVVDVFIDRSKGPGLFITVEWINDNLMADSLADSVIAILYSIDSSPASVKLSSQNHNHGDNHIVKKEDSMEIDRPVEAHAKTDIKSRIERIALLLKAQFGDSLKELPEEKAIIQIGKTVANVDYKRLEVECSSKVLKDRVENVIKRGCQLTAPLSQNPKIA.

Positions 159, 161, 163, 164, 256, and 277 each coordinate Zn(2+). His499 acts as the Proton donor in catalysis. Residue His521 coordinates Zn(2+). The segment at 598–627 is disordered; it reads ITELTEEKEEADEIKEDNGETDTTQKPNES. Acidic residues predominate over residues 601–612; that stretch reads LTEEKEEADEIK. Positions 618–627 are enriched in polar residues; the sequence is TDTTQKPNES.

The protein belongs to the metallo-beta-lactamase superfamily. RNA-metabolizing metallo-beta-lactamase-like family. CPSF2/YSH1 subfamily.

The protein resides in the nucleus. Component of the cleavage factor I (CF I) involved in pre-mRNA 3'-end processing. This Candida albicans (strain SC5314 / ATCC MYA-2876) (Yeast) protein is Endoribonuclease YSH1 (YSH1).